The chain runs to 843 residues: Aminopeptidase N (843 aa).

Substrate-binding positions include Glu120 and 252–256; that span reads GAMEN. Zn(2+) is bound at residue His288. Glu289 serves as the catalytic Proton acceptor. The Zn(2+) site is built by His292 and Glu311.

The protein belongs to the peptidase M1 family. Monomer. The cofactor is Zn(2+).

The protein resides in the cytoplasm. The enzyme catalyses Release of an N-terminal amino acid, Xaa-|-Yaa- from a peptide, amide or arylamide. Xaa is preferably Ala, but may be most amino acids including Pro (slow action). When a terminal hydrophobic residue is followed by a prolyl residue, the two may be released as an intact Xaa-Pro dipeptide.. Its function is as follows. Aminopeptidase with broad substrate specificity to several peptides. This is Aminopeptidase N (pepN) from Lactobacillus delbrueckii subsp. lactis.